The primary structure comprises 430 residues: Lipoyl synthase, chloroplastic (430 aa).

Polar residues predominate over residues 1 to 16; the sequence is MRSLATLHQSPASCSR. The transit peptide at 1–40 directs the protein to the chloroplast; the sequence is MRSLATLHQSPASCSRSAPVAPCPARRANSSRRVARQGPR. Disordered stretches follow at residues 1-55 and 85-119; these read MRSL…SEDV and HLRS…SLGA. The segment covering 91 to 119 has biased composition (low complexity); it reads KSAAPVSPFAAPSPGSPSASSMLGPSLGA. The [4Fe-4S] cluster site is built by Cys155, Cys160, Cys166, Cys183, Cys187, Cys190, and Ser397. The region spanning 166–386 is the Radical SAM core domain; that stretch reads CWNGELATAT…KFGQEEIGFR (221 aa).

The protein belongs to the radical SAM superfamily. Lipoyl synthase family. It depends on [4Fe-4S] cluster as a cofactor.

The protein localises to the plastid. The protein resides in the chloroplast. It catalyses the reaction [[Fe-S] cluster scaffold protein carrying a second [4Fe-4S](2+) cluster] + N(6)-octanoyl-L-lysyl-[protein] + 2 oxidized [2Fe-2S]-[ferredoxin] + 2 S-adenosyl-L-methionine + 4 H(+) = [[Fe-S] cluster scaffold protein] + N(6)-[(R)-dihydrolipoyl]-L-lysyl-[protein] + 4 Fe(3+) + 2 hydrogen sulfide + 2 5'-deoxyadenosine + 2 L-methionine + 2 reduced [2Fe-2S]-[ferredoxin]. It functions in the pathway protein modification; protein lipoylation via endogenous pathway; protein N(6)-(lipoyl)lysine from octanoyl-[acyl-carrier-protein]: step 2/2. Catalyzes the radical-mediated insertion of two sulfur atoms into the C-6 and C-8 positions of the octanoyl moiety bound to the lipoyl domains of lipoate-dependent enzymes, thereby converting the octanoylated domains into lipoylated derivatives. The sequence is that of Lipoyl synthase, chloroplastic from Chlamydomonas reinhardtii (Chlamydomonas smithii).